The sequence spans 363 residues: Fructose-bisphosphate aldolase, muscle type (363 aa).

Substrate-binding residues include R56 and K147. The active-site Schiff-base intermediate with dihydroxyacetone-P is the K230.

It belongs to the class I fructose-bisphosphate aldolase family. As to quaternary structure, homotetramer. Expressed mainly in the skeletal muscle, heart muscle, brain, and some other tissues, but probably not in liver.

It catalyses the reaction beta-D-fructose 1,6-bisphosphate = D-glyceraldehyde 3-phosphate + dihydroxyacetone phosphate. The protein operates within carbohydrate degradation; glycolysis; D-glyceraldehyde 3-phosphate and glycerone phosphate from D-glucose: step 4/4. The chain is Fructose-bisphosphate aldolase, muscle type from Lethenteron camtschaticum (Japanese lamprey).